The chain runs to 291 residues: 4-hydroxy-tetrahydrodipicolinate synthase (291 aa).

Thr-45 serves as a coordination point for pyruvate. The active-site Proton donor/acceptor is the Tyr-133. Catalysis depends on Lys-161, which acts as the Schiff-base intermediate with substrate. Ile-203 is a pyruvate binding site.

It belongs to the DapA family. In terms of assembly, homotetramer; dimer of dimers.

The protein localises to the cytoplasm. The enzyme catalyses L-aspartate 4-semialdehyde + pyruvate = (2S,4S)-4-hydroxy-2,3,4,5-tetrahydrodipicolinate + H2O + H(+). It participates in amino-acid biosynthesis; L-lysine biosynthesis via DAP pathway; (S)-tetrahydrodipicolinate from L-aspartate: step 3/4. Catalyzes the condensation of (S)-aspartate-beta-semialdehyde [(S)-ASA] and pyruvate to 4-hydroxy-tetrahydrodipicolinate (HTPA). The chain is 4-hydroxy-tetrahydrodipicolinate synthase from Acidithiobacillus ferrooxidans (strain ATCC 23270 / DSM 14882 / CIP 104768 / NCIMB 8455) (Ferrobacillus ferrooxidans (strain ATCC 23270)).